The chain runs to 142 residues: Large ribosomal subunit protein uL11 (142 aa).

Belongs to the universal ribosomal protein uL11 family. As to quaternary structure, part of the ribosomal stalk of the 50S ribosomal subunit. Interacts with L10 and the large rRNA to form the base of the stalk. L10 forms an elongated spine to which L12 dimers bind in a sequential fashion forming a multimeric L10(L12)X complex. Post-translationally, one or more lysine residues are methylated.

Forms part of the ribosomal stalk which helps the ribosome interact with GTP-bound translation factors. The protein is Large ribosomal subunit protein uL11 of Shewanella loihica (strain ATCC BAA-1088 / PV-4).